A 434-amino-acid chain; its full sequence is GTPase Obg (434 aa).

The 158-residue stretch at 1-158 (MFLDTAKIKV…RELQLELKIL (158 aa)) folds into the Obg domain. An OBG-type G domain is found at 159–336 (ADVGLVGFPS…LLDATAELLD (178 aa)). Residues 165–172 (GFPSVGKS), 190–194 (FTTIV), 212–215 (DLPG), 282–285 (NKMD), and 317–319 (SGL) contribute to the GTP site. Ser172 and Thr192 together coordinate Mg(2+). Residues 356-434 (GFDEEEKAFE…IGKFEFEFVD (79 aa)) enclose the OCT domain.

The protein belongs to the TRAFAC class OBG-HflX-like GTPase superfamily. OBG GTPase family. Monomer. It depends on Mg(2+) as a cofactor.

The protein resides in the cytoplasm. Functionally, an essential GTPase which binds GTP, GDP and possibly (p)ppGpp with moderate affinity, with high nucleotide exchange rates and a fairly low GTP hydrolysis rate. Plays a role in control of the cell cycle, stress response, ribosome biogenesis and in those bacteria that undergo differentiation, in morphogenesis control. The chain is GTPase Obg from Streptococcus pneumoniae (strain Hungary19A-6).